We begin with the raw amino-acid sequence, 137 residues long: MVSMKEFIGRWKLVHSENFEEYLKEIGVGLLIRKAASLTSPTLEIKLDGDTWHFNQYSTFKNNKLAFKIREKFVEIAPDERSYNTLVTFENGKFISHQDKIKENHHSSVFTTWLENGKLLQTYQSGSVICRREFVKE.

A Nuclear localization signal motif is present at residues 24–34 (KEIGVGLLIRK).

Belongs to the calycin superfamily. Fatty-acid binding protein (FABP) family. Monomer. In terms of tissue distribution, intestine.

The protein resides in the lysosome. Its subcellular location is the nucleus. In terms of biological role, lysosomal lipid chaperone which binds to a wide range of unsaturated fatty acids, including high affinity binding to oleic acid and oleoylethanolamide, to transport them into the nucleus. As part of a lysosome-to-nucleus retrograde lipid signaling pathway, translocates into the nucleus where it activates the transcription of genes promoting longevity and activation of mitochondrial beta oxidation. The polypeptide is Fatty acid-binding protein homolog 8 (Caenorhabditis elegans).